The chain runs to 114 residues: UPF0339 protein PM0519 (114 aa).

Tandem repeats lie at residues A11–V59 and A62–L110.

The protein belongs to the UPF0339 family. Duplicated subfamily.

This chain is UPF0339 protein PM0519, found in Pasteurella multocida (strain Pm70).